The primary structure comprises 316 residues: L-lactate dehydrogenase (316 aa).

34–39 (DVVEGV) is a binding site for NAD(+). Substrate is bound by residues R89, N121, and R152. N121 lines the NAD(+) pocket. H172 functions as the Proton acceptor in the catalytic mechanism.

Belongs to the LDH/MDH superfamily. LDH family. As to quaternary structure, homotetramer.

The catalysed reaction is (S)-lactate + NAD(+) = pyruvate + NADH + H(+). It participates in fermentation; pyruvate fermentation to lactate; (S)-lactate from pyruvate: step 1/1. The polypeptide is L-lactate dehydrogenase (Botryococcus braunii (Green alga)).